We begin with the raw amino-acid sequence, 591 residues long: Oligopeptide-binding protein OppA (591 aa).

The protein belongs to the bacterial solute-binding protein 5 family. The complex is composed of an ATP-binding protein (OppD), two transmembrane proteins (OppB and OppC) and a solute-binding protein (OppA).

Its subcellular location is the periplasm. Its function is as follows. Part of the ABC transporter complex OppABCD involved in the uptake of oligopeptides. Peptide-binding protein that shows broad specificity but a moderate preference for hydrophobic oligopeptides and those that are 6-16 amino acids long. This chain is Oligopeptide-binding protein OppA, found in Mycobacterium bovis (strain ATCC BAA-935 / AF2122/97).